The primary structure comprises 905 residues: Protein translocase subunit SecA (905 aa).

Residues Q89, 107 to 111, and D502 each bind ATP; that span reads GEGKT. Residues C887, C889, C898, and H899 each coordinate Zn(2+).

It belongs to the SecA family. Monomer and homodimer. Part of the essential Sec protein translocation apparatus which comprises SecA, SecYEG and auxiliary proteins SecDF-YajC and YidC. Zn(2+) is required as a cofactor.

Its subcellular location is the cell inner membrane. It is found in the cytoplasm. It carries out the reaction ATP + H2O + cellular proteinSide 1 = ADP + phosphate + cellular proteinSide 2.. Its function is as follows. Part of the Sec protein translocase complex. Interacts with the SecYEG preprotein conducting channel. Has a central role in coupling the hydrolysis of ATP to the transfer of proteins into and across the cell membrane, serving both as a receptor for the preprotein-SecB complex and as an ATP-driven molecular motor driving the stepwise translocation of polypeptide chains across the membrane. This Rhizobium leguminosarum bv. trifolii (strain WSM2304) protein is Protein translocase subunit SecA.